The chain runs to 364 residues: 3'(2'),5'-bisphosphate nucleotidase 1 (364 aa).

The active-site Proton acceptor is Asp-54. Residues Glu-77, Asp-141, Ile-143, and Asp-144 each coordinate Mg(2+). Thr-146 functions as the Proton acceptor in the catalytic mechanism. Thr-146, His-243, Ser-272, Lys-275, Arg-289, and Asp-302 together coordinate adenosine 3',5'-bisphosphate. 5 residues coordinate AMP: His-243, Ser-272, Lys-275, Arg-289, and Asp-302. Asp-302 serves as a coordination point for Mg(2+).

Belongs to the inositol monophosphatase superfamily. Mg(2+) is required as a cofactor.

It carries out the reaction 3'-phosphoadenylyl sulfate + H2O = adenosine 5'-phosphosulfate + phosphate. The enzyme catalyses adenosine 3',5'-bisphosphate + H2O = AMP + phosphate. The catalysed reaction is adenosine 2',5'-bisphosphate + H2O = AMP + phosphate. Phosphatase that converts adenosine 3'-phosphate 5'-phosphosulfate (PAPS) to adenosine 5'-phosphosulfate (APS) and 3'(2')-phosphoadenosine 5'-phosphate (PAP) to AMP. Regulates the flux of sulfur in the sulfur-activation pathway by converting PAPS to APS. Involved in salt tolerance. This chain is 3'(2'),5'-bisphosphate nucleotidase 1 (HAL21), found in Candida albicans (strain WO-1) (Yeast).